A 196-amino-acid polypeptide reads, in one-letter code: Putative NADH dehydrogenase/NAD(P)H nitroreductase Smlt0482 (196 aa).

It belongs to the nitroreductase family. HadB/RutE subfamily. The cofactor is FMN.

In Stenotrophomonas maltophilia (strain K279a), this protein is Putative NADH dehydrogenase/NAD(P)H nitroreductase Smlt0482.